Reading from the N-terminus, the 249-residue chain is Phosphoadenosine 5'-phosphosulfate reductase (249 aa).

Residue C230 is the Nucleophile; cysteine thiosulfonate intermediate of the active site.

Belongs to the PAPS reductase family. CysH subfamily.

The protein localises to the cytoplasm. It catalyses the reaction [thioredoxin]-disulfide + sulfite + adenosine 3',5'-bisphosphate + 2 H(+) = [thioredoxin]-dithiol + 3'-phosphoadenylyl sulfate. It functions in the pathway sulfur metabolism; hydrogen sulfide biosynthesis; sulfite from sulfate: step 3/3. Its function is as follows. Catalyzes the formation of sulfite from phosphoadenosine 5'-phosphosulfate (PAPS) using thioredoxin as an electron donor. This is Phosphoadenosine 5'-phosphosulfate reductase from Synechocystis sp. (strain ATCC 27184 / PCC 6803 / Kazusa).